Consider the following 214-residue polypeptide: Outer-membrane lipoprotein LolB (214 aa).

The first 25 residues, 1-25 (MNNLKRLTKTIFSCFTLSALLLLAG), serve as a signal peptide directing secretion. A lipid anchor (N-palmitoyl cysteine) is attached at Cys26. A lipid anchor (S-diacylglycerol cysteine) is attached at Cys26. A compositionally biased stretch (polar residues) spans 143–160 (QVIESDSQGKPKQLTNTQ). A disordered region spans residues 143–163 (QVIESDSQGKPKQLTNTQTPP).

This sequence belongs to the LolB family. In terms of assembly, monomer.

It is found in the cell outer membrane. Plays a critical role in the incorporation of lipoproteins in the outer membrane after they are released by the LolA protein. This is Outer-membrane lipoprotein LolB from Shewanella baltica (strain OS223).